A 260-amino-acid chain; its full sequence is Isoprenyl transferase (260 aa).

Residue aspartate 40 is part of the active site. Position 40 (aspartate 40) interacts with Mg(2+). Substrate is bound by residues glycine 41 to arginine 44, tryptophan 45, arginine 53, histidine 57, and serine 85 to glutamate 87. The Proton acceptor role is filled by asparagine 88. Substrate is bound by residues tryptophan 89, arginine 91, arginine 208, and arginine 214–serine 216. Glutamate 227 lines the Mg(2+) pocket.

The protein belongs to the UPP synthase family. As to quaternary structure, homodimer. It depends on Mg(2+) as a cofactor.

Its function is as follows. Catalyzes the condensation of isopentenyl diphosphate (IPP) with allylic pyrophosphates generating different type of terpenoids. The sequence is that of Isoprenyl transferase from Bacillus subtilis (strain 168).